Reading from the N-terminus, the 433-residue chain is tRNA modification GTPase MnmE (433 aa).

(6S)-5-formyl-5,6,7,8-tetrahydrofolate contacts are provided by Arg-24, Glu-81, and Arg-120. The TrmE-type G domain occupies 216–359; the sequence is GVEIVVLGAP…LLAALRARVE (144 aa). Asn-226 is a K(+) binding site. Residues 226 to 231, 245 to 251, 270 to 273, and 340 to 342 each bind GTP; these read NAGKST, SDIPGTT, DTAG, and SAR. Ser-230 contributes to the Mg(2+) binding site. Residues Ser-245, Ile-247, and Thr-250 each contribute to the K(+) site. Residue Thr-251 coordinates Mg(2+). Residue Lys-433 coordinates (6S)-5-formyl-5,6,7,8-tetrahydrofolate.

It belongs to the TRAFAC class TrmE-Era-EngA-EngB-Septin-like GTPase superfamily. TrmE GTPase family. As to quaternary structure, homodimer. Heterotetramer of two MnmE and two MnmG subunits. The cofactor is K(+).

The protein localises to the cytoplasm. Functionally, exhibits a very high intrinsic GTPase hydrolysis rate. Involved in the addition of a carboxymethylaminomethyl (cmnm) group at the wobble position (U34) of certain tRNAs, forming tRNA-cmnm(5)s(2)U34. This is tRNA modification GTPase MnmE from Acidiphilium cryptum (strain JF-5).